The primary structure comprises 271 residues: Tryptophan synthase alpha chain (271 aa).

Catalysis depends on proton acceptor residues Glu49 and Asp60.

This sequence belongs to the TrpA family. As to quaternary structure, tetramer of two alpha and two beta chains.

It carries out the reaction (1S,2R)-1-C-(indol-3-yl)glycerol 3-phosphate + L-serine = D-glyceraldehyde 3-phosphate + L-tryptophan + H2O. It participates in amino-acid biosynthesis; L-tryptophan biosynthesis; L-tryptophan from chorismate: step 5/5. In terms of biological role, the alpha subunit is responsible for the aldol cleavage of indoleglycerol phosphate to indole and glyceraldehyde 3-phosphate. The sequence is that of Tryptophan synthase alpha chain from Burkholderia pseudomallei (strain K96243).